Here is a 233-residue protein sequence, read N- to C-terminus: Orotidine 5'-phosphate decarboxylase (233 aa).

Substrate-binding positions include Asp11, Lys33, 60–69 (DLKFHDIPNT), Thr120, Arg181, Gln190, Gly210, and Arg211. The active-site Proton donor is Lys62.

This sequence belongs to the OMP decarboxylase family. Type 1 subfamily. Homodimer.

The enzyme catalyses orotidine 5'-phosphate + H(+) = UMP + CO2. Its pathway is pyrimidine metabolism; UMP biosynthesis via de novo pathway; UMP from orotate: step 2/2. Catalyzes the decarboxylation of orotidine 5'-monophosphate (OMP) to uridine 5'-monophosphate (UMP). In Vibrio parahaemolyticus serotype O3:K6 (strain RIMD 2210633), this protein is Orotidine 5'-phosphate decarboxylase.